Reading from the N-terminus, the 332-residue chain is Heterogeneous nuclear ribonucleoprotein A/B (332 aa).

The interval 1–66 (MSEAGEEQPM…DQINASKNEE (66 aa)) is disordered. The span at 29–49 (GRGWTGAAAGAGGATAAPPSG) shows a compositional bias: low complexity. RRM domains are found at residues 69–154 (GKMF…PVKK) and 153–233 (KKIF…QPKE). S81 is modified (phosphoserine). Residues K130 and K203 each participate in a glycyl lysine isopeptide (Lys-Gly) (interchain with G-Cter in SUMO2) cross-link. K215 carries the post-translational modification N6-acetyllysine. The tract at residues 235–268 (YQQQQYGSGGRGNRNRGNRGSGGGGGGGGQSQSW) is disordered. At S242 the chain carries Phosphoserine. The residue at position 245 (R245) is a Dimethylated arginine; alternate. Omega-N-methylarginine; alternate is present on R245. R250, G251, R253, and G254 each carry omega-N-methylarginine. A compositionally biased stretch (gly residues) spans 253 to 264 (RGSGGGGGGGGQ). S255 and G256 each carry phosphoserine. N6-acetyllysine is present on residues G271, Y272, and K318. A disordered region spans residues 311–332 (QGSTNYGKSQRRGGHQNNYKPY). R322 carries the post-translational modification Dimethylated arginine; alternate. Omega-N-methylarginine; alternate is present on R322. R322 is subject to Asymmetric dimethylarginine; alternate.

In terms of assembly, identified in a IGF2BP1-dependent mRNP granule complex containing untranslated mRNAs. Interacts with APOBEC1. Dimethylation at Arg-322 is probably asymmetric. As to expression, ubiquitous.

The protein localises to the nucleus. The protein resides in the cytoplasm. Functionally, binds single-stranded RNA. Has a high affinity for G-rich and U-rich regions of hnRNA. Also binds to APOB mRNA transcripts around the RNA editing site. In Homo sapiens (Human), this protein is Heterogeneous nuclear ribonucleoprotein A/B (HNRNPAB).